The following is a 144-amino-acid chain: Large ribosomal subunit protein uL15 (144 aa).

Residues 1-56 (MELNTLAPAPGAKSSKKRVGRGIGSGLGKTGGRGHKGQKSRSGGSVKPGFEGGQMP) form a disordered region. Residues 21-31 (RGIGSGLGKTG) are compositionally biased toward gly residues.

This sequence belongs to the universal ribosomal protein uL15 family. As to quaternary structure, part of the 50S ribosomal subunit.

In terms of biological role, binds to the 23S rRNA. In Idiomarina loihiensis (strain ATCC BAA-735 / DSM 15497 / L2-TR), this protein is Large ribosomal subunit protein uL15.